Consider the following 377-residue polypeptide: Dihydroorotase, mitochondrial (377 aa).

Residues H44, H46, K130, H168, and H206 each contribute to the Zn(2+) site. Position 130 is an N6-carboxylysine (K130). The residue at position 223 (S223) is a Phosphoserine. Residue D280 participates in Zn(2+) binding.

It belongs to the metallo-dependent hydrolases superfamily. DHOase family. Class II DHOase subfamily. It depends on Zn(2+) as a cofactor.

It is found in the mitochondrion. It catalyses the reaction (S)-dihydroorotate + H2O = N-carbamoyl-L-aspartate + H(+). The protein operates within pyrimidine metabolism; UMP biosynthesis via de novo pathway; (S)-dihydroorotate from bicarbonate: step 3/3. In Arabidopsis thaliana (Mouse-ear cress), this protein is Dihydroorotase, mitochondrial (PYR4).